Reading from the N-terminus, the 465-residue chain is tRNA modification GTPase MnmE (465 aa).

3 residues coordinate (6S)-5-formyl-5,6,7,8-tetrahydrofolate: Arg30, Glu92, and Arg132. The TrmE-type G domain occupies 227–388 (GLQVALVGRP…LIEAVLKTCG (162 aa)). Position 237 (Asn237) interacts with K(+). GTP-binding positions include 237-242 (NVGKSS), 256-262 (TDLPGTT), 281-284 (DTAG), and 342-345 (NKAD). A Mg(2+)-binding site is contributed by Ser241. Positions 256, 258, and 261 each coordinate K(+). Thr262 provides a ligand contact to Mg(2+). Lys465 contributes to the (6S)-5-formyl-5,6,7,8-tetrahydrofolate binding site.

This sequence belongs to the TRAFAC class TrmE-Era-EngA-EngB-Septin-like GTPase superfamily. TrmE GTPase family. In terms of assembly, homodimer. Heterotetramer of two MnmE and two MnmG subunits. The cofactor is K(+).

The protein resides in the cytoplasm. Exhibits a very high intrinsic GTPase hydrolysis rate. Involved in the addition of a carboxymethylaminomethyl (cmnm) group at the wobble position (U34) of certain tRNAs, forming tRNA-cmnm(5)s(2)U34. This chain is tRNA modification GTPase MnmE, found in Prochlorococcus marinus (strain MIT 9303).